Reading from the N-terminus, the 355-residue chain is Inositol-tetrakisphosphate 1-kinase 4 (355 aa).

Lys-65 serves as a coordination point for 1D-myo-inositol 1,3,4-trisphosphate. ATP contacts are provided by Arg-101 and Lys-146. The 212-residue stretch at 107 to 318 (VVSGLRTPVS…FFLEMLRGTR (212 aa)) folds into the ATP-grasp domain. The 1D-myo-inositol 1,3,4-trisphosphate site is built by His-157 and Lys-190. ATP contacts are provided by residues 179–190 (QEFVNHGGVLFK) and Ser-205. The tract at residues 225–248 (FANISNQPLPPPDDDGGAADDDTP) is disordered. Acidic residues predominate over residues 236 to 247 (PDDDGGAADDDT). Residues Asp-272, Asp-289, and Asn-291 each contribute to the Mg(2+) site. Residue Asn-291 coordinates 1D-myo-inositol 1,3,4-trisphosphate.

It belongs to the ITPK1 family. Monomer. It depends on Mg(2+) as a cofactor.

The catalysed reaction is 1D-myo-inositol 3,4,5,6-tetrakisphosphate + ATP = 1D-myo-inositol 1,3,4,5,6-pentakisphosphate + ADP + H(+). It carries out the reaction 1D-myo-inositol 1,3,4-trisphosphate + ATP = 1D-myo-inositol 1,3,4,5-tetrakisphosphate + ADP + H(+). It catalyses the reaction 1D-myo-inositol 1,3,4-trisphosphate + ATP = 1D-myo-inositol 1,3,4,6-tetrakisphosphate + ADP + H(+). In terms of biological role, kinase that can phosphorylate various inositol polyphosphate such as Ins(3,4,5,6)P4 or Ins(1,3,4)P3 and participates in phytic acid biosynthesis in developing seeds. Phytic acid is the primary storage form of phosphorus in cereal grains and other plant seeds. This is Inositol-tetrakisphosphate 1-kinase 4 (ITPK4) from Oryza sativa subsp. indica (Rice).